The chain runs to 434 residues: ATP-dependent protease ATPase subunit HslU (434 aa).

ATP contacts are provided by residues V18, 60–65 (GVGKTE), D247, E312, and R384.

This sequence belongs to the ClpX chaperone family. HslU subfamily. A double ring-shaped homohexamer of HslV is capped on each side by a ring-shaped HslU homohexamer. The assembly of the HslU/HslV complex is dependent on binding of ATP.

It is found in the cytoplasm. In terms of biological role, ATPase subunit of a proteasome-like degradation complex; this subunit has chaperone activity. The binding of ATP and its subsequent hydrolysis by HslU are essential for unfolding of protein substrates subsequently hydrolyzed by HslV. HslU recognizes the N-terminal part of its protein substrates and unfolds these before they are guided to HslV for hydrolysis. The polypeptide is ATP-dependent protease ATPase subunit HslU (Phenylobacterium zucineum (strain HLK1)).